A 73-amino-acid chain; its full sequence is Putative antitoxin VapB21 (73 aa).

The protein belongs to the UPF0330 family.

In terms of biological role, possibly the antitoxin component of a type II toxin-antitoxin (TA) system. Its cognate toxin is VapC21 (Potential). In Sulfurisphaera tokodaii (strain DSM 16993 / JCM 10545 / NBRC 100140 / 7) (Sulfolobus tokodaii), this protein is Putative antitoxin VapB21 (vapB21).